We begin with the raw amino-acid sequence, 144 residues long: Deoxyuridine 5'-triphosphate nucleotidohydrolase (144 aa).

Substrate is bound by residues 63–65 (RSG), N76, and 80–82 (TVD).

It belongs to the dUTPase family. It depends on Mg(2+) as a cofactor.

It catalyses the reaction dUTP + H2O = dUMP + diphosphate + H(+). It functions in the pathway pyrimidine metabolism; dUMP biosynthesis; dUMP from dCTP (dUTP route): step 2/2. Its function is as follows. This enzyme is involved in nucleotide metabolism: it produces dUMP, the immediate precursor of thymidine nucleotides and it decreases the intracellular concentration of dUTP so that uracil cannot be incorporated into DNA. The polypeptide is Deoxyuridine 5'-triphosphate nucleotidohydrolase (Flavobacterium johnsoniae (strain ATCC 17061 / DSM 2064 / JCM 8514 / BCRC 14874 / CCUG 350202 / NBRC 14942 / NCIMB 11054 / UW101) (Cytophaga johnsonae)).